The following is a 101-amino-acid chain: Putative pterin-4-alpha-carbinolamine dehydratase (101 aa).

The protein belongs to the pterin-4-alpha-carbinolamine dehydratase family.

It catalyses the reaction (4aS,6R)-4a-hydroxy-L-erythro-5,6,7,8-tetrahydrobiopterin = (6R)-L-erythro-6,7-dihydrobiopterin + H2O. This is Putative pterin-4-alpha-carbinolamine dehydratase from Rhodopseudomonas palustris (strain BisB18).